The following is a 264-amino-acid chain: 3-methyl-2-oxobutanoate hydroxymethyltransferase (264 aa).

Residues aspartate 45 and aspartate 84 each contribute to the Mg(2+) site. Residues 45–46 (DS), aspartate 84, and lysine 112 contribute to the 3-methyl-2-oxobutanoate site. Residue glutamate 114 coordinates Mg(2+). Glutamate 181 (proton acceptor) is an active-site residue.

Belongs to the PanB family. As to quaternary structure, homodecamer; pentamer of dimers. Mg(2+) is required as a cofactor.

It localises to the cytoplasm. It catalyses the reaction 3-methyl-2-oxobutanoate + (6R)-5,10-methylene-5,6,7,8-tetrahydrofolate + H2O = 2-dehydropantoate + (6S)-5,6,7,8-tetrahydrofolate. The protein operates within cofactor biosynthesis; (R)-pantothenate biosynthesis; (R)-pantoate from 3-methyl-2-oxobutanoate: step 1/2. In terms of biological role, catalyzes the reversible reaction in which hydroxymethyl group from 5,10-methylenetetrahydrofolate is transferred onto alpha-ketoisovalerate to form ketopantoate. This chain is 3-methyl-2-oxobutanoate hydroxymethyltransferase, found in Escherichia coli O127:H6 (strain E2348/69 / EPEC).